A 666-amino-acid polypeptide reads, in one-letter code: 1-deoxy-D-xylulose-5-phosphate synthase (666 aa).

Residues His103 and 144-146 (AHS) each bind thiamine diphosphate. Asp175 contacts Mg(2+). Residues 176-177 (GA), Asn204, Tyr314, and Glu396 each bind thiamine diphosphate. Asn204 provides a ligand contact to Mg(2+).

It belongs to the transketolase family. DXPS subfamily. In terms of assembly, homodimer. Mg(2+) serves as cofactor. The cofactor is thiamine diphosphate.

It catalyses the reaction D-glyceraldehyde 3-phosphate + pyruvate + H(+) = 1-deoxy-D-xylulose 5-phosphate + CO2. Its pathway is metabolic intermediate biosynthesis; 1-deoxy-D-xylulose 5-phosphate biosynthesis; 1-deoxy-D-xylulose 5-phosphate from D-glyceraldehyde 3-phosphate and pyruvate: step 1/1. Its function is as follows. Catalyzes the acyloin condensation reaction between C atoms 2 and 3 of pyruvate and glyceraldehyde 3-phosphate to yield 1-deoxy-D-xylulose-5-phosphate (DXP). The polypeptide is 1-deoxy-D-xylulose-5-phosphate synthase (Nitrobacter winogradskyi (strain ATCC 25391 / DSM 10237 / CIP 104748 / NCIMB 11846 / Nb-255)).